We begin with the raw amino-acid sequence, 427 residues long: Serine--tRNA ligase (427 aa).

230-232 (TAE) lines the L-serine pocket. 261–263 (RAE) is a binding site for ATP. An L-serine-binding site is contributed by glutamate 284. 348–351 (EISS) serves as a coordination point for ATP. Position 384 (serine 384) interacts with L-serine.

The protein belongs to the class-II aminoacyl-tRNA synthetase family. Type-1 seryl-tRNA synthetase subfamily. As to quaternary structure, homodimer. The tRNA molecule binds across the dimer.

The protein resides in the cytoplasm. It carries out the reaction tRNA(Ser) + L-serine + ATP = L-seryl-tRNA(Ser) + AMP + diphosphate + H(+). The enzyme catalyses tRNA(Sec) + L-serine + ATP = L-seryl-tRNA(Sec) + AMP + diphosphate + H(+). The protein operates within aminoacyl-tRNA biosynthesis; selenocysteinyl-tRNA(Sec) biosynthesis; L-seryl-tRNA(Sec) from L-serine and tRNA(Sec): step 1/1. In terms of biological role, catalyzes the attachment of serine to tRNA(Ser). Is also able to aminoacylate tRNA(Sec) with serine, to form the misacylated tRNA L-seryl-tRNA(Sec), which will be further converted into selenocysteinyl-tRNA(Sec). In Moorella thermoacetica (strain ATCC 39073 / JCM 9320), this protein is Serine--tRNA ligase.